Here is a 250-residue protein sequence, read N- to C-terminus: Dihydroorotate dehydrogenase B (NAD(+)), electron transfer subunit (250 aa).

The FAD-binding FR-type domain occupies 1–94 (MKVVAQEEIA…MGPQGNGFDL (94 aa)). Residues 45 to 48 (RPIS), 62 to 64 (IYR), and 69 to 70 (GT) contribute to the FAD site. Residues Cys-214, Cys-219, Cys-222, and Cys-237 each coordinate [2Fe-2S] cluster.

The protein belongs to the PyrK family. As to quaternary structure, heterotetramer of 2 PyrK and 2 PyrD type B subunits. Requires [2Fe-2S] cluster as cofactor. FAD serves as cofactor.

Its pathway is pyrimidine metabolism; UMP biosynthesis via de novo pathway; orotate from (S)-dihydroorotate (NAD(+) route): step 1/1. Functionally, responsible for channeling the electrons from the oxidation of dihydroorotate from the FMN redox center in the PyrD type B subunit to the ultimate electron acceptor NAD(+). This Streptococcus pneumoniae serotype 4 (strain ATCC BAA-334 / TIGR4) protein is Dihydroorotate dehydrogenase B (NAD(+)), electron transfer subunit.